The following is a 115-amino-acid chain: Large ribosomal subunit protein bL19 (115 aa).

The protein belongs to the bacterial ribosomal protein bL19 family.

In terms of biological role, this protein is located at the 30S-50S ribosomal subunit interface and may play a role in the structure and function of the aminoacyl-tRNA binding site. The protein is Large ribosomal subunit protein bL19 of Parabacteroides distasonis (strain ATCC 8503 / DSM 20701 / CIP 104284 / JCM 5825 / NCTC 11152).